The sequence spans 826 residues: Arsenite oxidase subunit AioA (826 aa).

[3Fe-4S] cluster is bound by residues Cys-22, Cys-25, and Cys-29. The substrate site is built by His-196, Glu-204, Arg-419, and His-423.

Belongs to the prokaryotic molybdopterin-containing oxidoreductase family. Heterodimer consisting of a large and a small subunit. The cofactor is [3Fe-4S] cluster. Requires Mo-bis(molybdopterin guanine dinucleotide) as cofactor.

It carries out the reaction 2 oxidized [azurin] + arsenite + H2O = 2 reduced [azurin] + arsenate + 3 H(+). Involved in the detoxification of arsenic. Oxidizes As(III)O3(3-) (arsenite) to the somewhat less toxic As(V)O4(3-) (arsenate). This Herminiimonas arsenicoxydans protein is Arsenite oxidase subunit AioA (aioA).